Reading from the N-terminus, the 369-residue chain is Dihydroorotate dehydrogenase (quinone) (369 aa).

FMN contacts are provided by residues 66–70 (AGFDK) and Thr-90. Residue Lys-70 coordinates substrate. 115–119 (NRMGF) is a binding site for substrate. Residues Asn-143 and Asn-176 each coordinate FMN. Substrate is bound at residue Asn-176. Ser-179 functions as the Nucleophile in the catalytic mechanism. Asn-181 serves as a coordination point for substrate. Lys-217 and Thr-245 together coordinate FMN. 246 to 247 (NT) contacts substrate. FMN-binding positions include Gly-271, Gly-300, and 321–322 (YT).

It belongs to the dihydroorotate dehydrogenase family. Type 2 subfamily. Monomer. FMN serves as cofactor.

The protein resides in the cell membrane. It catalyses the reaction (S)-dihydroorotate + a quinone = orotate + a quinol. It participates in pyrimidine metabolism; UMP biosynthesis via de novo pathway; orotate from (S)-dihydroorotate (quinone route): step 1/1. Functionally, catalyzes the conversion of dihydroorotate to orotate with quinone as electron acceptor. In Nocardia farcinica (strain IFM 10152), this protein is Dihydroorotate dehydrogenase (quinone).